Here is a 393-residue protein sequence, read N- to C-terminus: NAD(P)H-quinone oxidoreductase subunit H, chloroplastic (393 aa).

The protein belongs to the complex I 49 kDa subunit family. NDH is composed of at least 16 different subunits, 5 of which are encoded in the nucleus.

It is found in the plastid. The protein resides in the chloroplast thylakoid membrane. It carries out the reaction a plastoquinone + NADH + (n+1) H(+)(in) = a plastoquinol + NAD(+) + n H(+)(out). The catalysed reaction is a plastoquinone + NADPH + (n+1) H(+)(in) = a plastoquinol + NADP(+) + n H(+)(out). Functionally, NDH shuttles electrons from NAD(P)H:plastoquinone, via FMN and iron-sulfur (Fe-S) centers, to quinones in the photosynthetic chain and possibly in a chloroplast respiratory chain. The immediate electron acceptor for the enzyme in this species is believed to be plastoquinone. Couples the redox reaction to proton translocation, and thus conserves the redox energy in a proton gradient. This is NAD(P)H-quinone oxidoreductase subunit H, chloroplastic from Nicotiana sylvestris (Wood tobacco).